Consider the following 188-residue polypeptide: Acireductone dioxygenase (188 aa).

Fe(2+) contacts are provided by H97, H99, E103, and H141. Positions 97, 99, 103, and 141 each coordinate Ni(2+).

The protein belongs to the acireductone dioxygenase (ARD) family. As to quaternary structure, monomer. Fe(2+) serves as cofactor. Requires Ni(2+) as cofactor.

The catalysed reaction is 1,2-dihydroxy-5-(methylsulfanyl)pent-1-en-3-one + O2 = 3-(methylsulfanyl)propanoate + CO + formate + 2 H(+). The enzyme catalyses 1,2-dihydroxy-5-(methylsulfanyl)pent-1-en-3-one + O2 = 4-methylsulfanyl-2-oxobutanoate + formate + 2 H(+). Its pathway is amino-acid biosynthesis; L-methionine biosynthesis via salvage pathway; L-methionine from S-methyl-5-thio-alpha-D-ribose 1-phosphate: step 5/6. Its function is as follows. Catalyzes 2 different reactions between oxygen and the acireductone 1,2-dihydroxy-3-keto-5-methylthiopentene (DHK-MTPene) depending upon the metal bound in the active site. Fe-containing acireductone dioxygenase (Fe-ARD) produces formate and 2-keto-4-methylthiobutyrate (KMTB), the alpha-ketoacid precursor of methionine in the methionine recycle pathway. Ni-containing acireductone dioxygenase (Ni-ARD) produces methylthiopropionate, carbon monoxide and formate, and does not lie on the methionine recycle pathway. The polypeptide is Acireductone dioxygenase (Xanthomonas axonopodis pv. citri (strain 306)).